Reading from the N-terminus, the 228-residue chain is MAAPQDVHVRICNQEIVKFDLEVKALIQDIRDCSGPLSELTELNTKVKEKFQQLKHRIQELEQSAKEQDKESEKQLLLQEVENHKKQMLSNQTSWRKANLTCKLAIDNLEKAELLQGGDSLRQRKTTKESLAQTSSTITESLMGISRMMSQQVQQSEEAMQTLVSSSRTLLDANEEFKSMSGTIQLGRKLITKYNRRELTDKLLIFLALALFLATVLYIVKKRLFPFL.

The Cytoplasmic portion of the chain corresponds to 1 to 199 (MAAPQDVHVR…LITKYNRREL (199 aa)). Positions 37–90 (LSELTELNTKVKEKFQQLKHRIQELEQSAKEQDKESEKQLLLQEVENHKKQMLS) form a coiled coil. Residues 200–220 (TDKLLIFLALALFLATVLYIV) form a helical; Anchor for type IV membrane protein membrane-spanning segment. The Lumenal portion of the chain corresponds to 221-228 (KKRLFPFL).

It belongs to the SEC20 family. In terms of assembly, component of a SNARE complex consisting of STX18, USE1L, BNIP1/SEC20L and SEC22B. Interacts directly with STX18, RINT1/TIP20L and NAPA. Interacts with ZW10 through RINT1. Interacts with BCL2. Interacts with RNF186. Interacts with RNF185. Interacts with SQSTM1; increased by 'Lys-63'-linked polyubiquitination of BNIP1. Post-translationally, polyubiquitinated. 'Lys-63'-linked polyubiquitination by RNF185 increases the interaction with the autophagy receptor SQSTM1. Undergoes 'Lys-29'- and 'Lys-63'-linked polyubiquitination by RNF186 that may regulate BNIP1 localization to the mitochondrion.

It localises to the endoplasmic reticulum membrane. The protein localises to the mitochondrion membrane. As part of a SNARE complex may be involved in endoplasmic reticulum membranes fusion and be required for the maintenance of endoplasmic reticulum organization. Also plays a role in apoptosis. It is for instance required for endoplasmic reticulum stress-induced apoptosis. As a substrate of RNF185 interacting with SQSTM1, might also be involved in mitochondrial autophagy. This is Vesicle transport protein SEC20 from Rattus norvegicus (Rat).